The primary structure comprises 200 residues: Probable molybdenum cofactor guanylyltransferase (200 aa).

GTP is bound by residues 9 to 11, lysine 21, aspartate 69, and aspartate 100; that span reads LAG. Aspartate 100 contacts Mg(2+).

It belongs to the MobA family. Requires Mg(2+) as cofactor.

Its subcellular location is the cytoplasm. It catalyses the reaction Mo-molybdopterin + GTP + H(+) = Mo-molybdopterin guanine dinucleotide + diphosphate. In terms of biological role, transfers a GMP moiety from GTP to Mo-molybdopterin (Mo-MPT) cofactor (Moco or molybdenum cofactor) to form Mo-molybdopterin guanine dinucleotide (Mo-MGD) cofactor. The polypeptide is Probable molybdenum cofactor guanylyltransferase (Bacillus cereus (strain ZK / E33L)).